Here is a 509-residue protein sequence, read N- to C-terminus: Heat shock 70 kDa protein 14 (509 aa).

Belongs to the heat shock protein 70 family. Component of ribosome-associated complex (RAC), a heterodimer composed of Hsp70/DnaK-type chaperone HSPA14 and Hsp40/DnaJ-type chaperone DNAJC2.

The protein resides in the cytoplasm. It localises to the cytosol. In terms of biological role, component of the ribosome-associated complex (RAC), a complex involved in folding or maintaining nascent polypeptides in a folding-competent state. In the RAC complex, binds to the nascent polypeptide chain, while DNAJC2 stimulates its ATPase activity. The chain is Heat shock 70 kDa protein 14 (HSPA14) from Macaca fascicularis (Crab-eating macaque).